Here is a 190-residue protein sequence, read N- to C-terminus: CASP-like protein 1E2 (190 aa).

The interval 1–21 (MEHEGKNNMNGMEMEKGKREL) is disordered. The Cytoplasmic portion of the chain corresponds to 1–28 (MEHEGKNNMNGMEMEKGKRELGSRKGVE). Residues 29–49 (LTMRVLALILTMAAATVLGVA) form a helical membrane-spanning segment. Residues 50–83 (KQTKVVSIKLIPTLPPLDITTTAKASYLSAFVYN) lie on the Extracellular side of the membrane. A helical transmembrane segment spans residues 84–104 (ISVNAIACGYTAISIAILMIS). At 105–111 (RGRRSKK) the chain is on the cytoplasmic side. A helical transmembrane segment spans residues 112 to 132 (LLMVVLLGDLVMVALLFSGTG). The Extracellular segment spans residues 133–163 (AASAIGLMGLHGNKHVMWKKVCGVFGKFCHR). The chain crosses the membrane as a helical span at residues 164–184 (AAPSLPLTLLAAVVFMFLVVL). Topologically, residues 185-190 (DAIKLP) are cytoplasmic.

This sequence belongs to the Casparian strip membrane proteins (CASP) family. In terms of assembly, homodimer and heterodimers.

Its subcellular location is the cell membrane. This is CASP-like protein 1E2 from Arabidopsis thaliana (Mouse-ear cress).